The chain runs to 211 residues: Thymidylate kinase (211 aa).

ATP is bound at residue 11-18 (GPDGAGKT).

It belongs to the thymidylate kinase family.

It catalyses the reaction dTMP + ATP = dTDP + ADP. In terms of biological role, phosphorylation of dTMP to form dTDP in both de novo and salvage pathways of dTTP synthesis. This is Thymidylate kinase from Streptococcus pyogenes serotype M18 (strain MGAS8232).